A 201-amino-acid polypeptide reads, in one-letter code: Recombination protein RecR (201 aa).

Residues 57 to 72 (CKYCSNFGNKDECDIC) form a C4-type zinc finger. Residues 80–176 (TKLMIVTTNE…QIYRIGFGIP (97 aa)) form the Toprim domain.

The protein belongs to the RecR family.

May play a role in DNA repair. It seems to be involved in an RecBC-independent recombinational process of DNA repair. It may act with RecF and RecO. The chain is Recombination protein RecR from Ureaplasma urealyticum serovar 10 (strain ATCC 33699 / Western).